A 202-amino-acid chain; its full sequence is Adenosylcobalamin/alpha-ribazole phosphatase (202 aa).

H8 functions as the Tele-phosphohistidine intermediate in the catalytic mechanism. E81 functions as the Proton donor/acceptor in the catalytic mechanism.

It belongs to the phosphoglycerate mutase family. In terms of assembly, monomer.

The enzyme catalyses adenosylcob(III)alamin 5'-phosphate + H2O = adenosylcob(III)alamin + phosphate. It catalyses the reaction alpha-ribazole 5'-phosphate + H2O = alpha-ribazole + phosphate. It functions in the pathway nucleoside biosynthesis; alpha-ribazole biosynthesis; alpha-ribazole from 5,6-dimethylbenzimidazole: step 2/2. Catalyzes the conversion of adenosylcobalamin 5'-phosphate to adenosylcobalamin (vitamin B12); involved in the assembly of the nucleotide loop of cobalamin. Also catalyzes the hydrolysis of the phospho group from alpha-ribazole 5'-phosphate to form alpha-ribazole. The polypeptide is Adenosylcobalamin/alpha-ribazole phosphatase (cobC) (Salmonella typhimurium (strain LT2 / SGSC1412 / ATCC 700720)).